We begin with the raw amino-acid sequence, 485 residues long: MDLTKLTAHELKDMLSNKEVKAEEITKAFLDRINLVDNKLGAYLYVSEEEAIKKAKEIDVKIEKNEELKALSGIPVGIKDNINVKGMQNTCASKILEGYTSPYDAHVTEKIKQEEGIILGKLNMDEFAMGSSTENSAFKLAKNPWDLERVPGGSSGGSAVAVAGSEATLSLGTDTGGSVRQPASFCGVVGLKPTYGRISRSGVVAFGSTLDQVGPMGKDVEDCALLTSAIAGLDKKDFTTADKEVPDYKKSLTKDIKGKRIGIPKEFFGDGLDKNVRKSVEEAIKVLEANGAEVKPCSLPLMDYALSAYYIISSAEASSNLARFDGIRYGYRSKNFKDAKDIYLKSRSEGFGDEVKRRIMLGTYVLSAGYYDAYYKKALKVRKLIKDDFQRVFKEFDAIVSPTSPTTAFKVGEKKDDVMSMYLSDIYTVPISVAGVPAISLPCGMVDGLPVGLQIISDYFKEDVLFNLAYNYEQSVDFHKMRADF.

Catalysis depends on charge relay system residues Lys79 and Ser154. The Acyl-ester intermediate role is filled by Ser178.

It belongs to the amidase family. GatA subfamily. Heterotrimer of A, B and C subunits.

It carries out the reaction L-glutamyl-tRNA(Gln) + L-glutamine + ATP + H2O = L-glutaminyl-tRNA(Gln) + L-glutamate + ADP + phosphate + H(+). Allows the formation of correctly charged Gln-tRNA(Gln) through the transamidation of misacylated Glu-tRNA(Gln) in organisms which lack glutaminyl-tRNA synthetase. The reaction takes place in the presence of glutamine and ATP through an activated gamma-phospho-Glu-tRNA(Gln). The chain is Glutamyl-tRNA(Gln) amidotransferase subunit A from Clostridium botulinum (strain Langeland / NCTC 10281 / Type F).